A 325-amino-acid polypeptide reads, in one-letter code: Melanocortin receptor 5 (325 aa).

The Extracellular portion of the chain corresponds to 1 to 37 (MNSSFHLHFLDLNLNATEGNLSGPNVKNKSSPCEDMG). Residues Asn-2, Asn-15, Asn-20, and Asn-28 are each glycosylated (N-linked (GlcNAc...) asparagine). The chain crosses the membrane as a helical span at residues 38–61 (IAVEVFLTLGVISLLENILVIGAI). The Cytoplasmic segment spans residues 62–73 (VKNKNLHSPMYF). A helical transmembrane segment spans residues 74 to 97 (FVCSLAVADMLVSMSSAWETITIY). Topologically, residues 98–114 (LLNNKHLVIADAFVRHI) are extracellular. A helical membrane pass occupies residues 115–138 (DNVFDSMICISVVASMCSLLAIAV). Over 139–155 (DRYVTIFYALRYHHIMT) the chain is Cytoplasmic. The chain crosses the membrane as a helical span at residues 156–179 (ARRSGAIIAGIWAFCTGCGIVFIL). Over 180–186 (YSESTYV) the chain is Extracellular. A helical membrane pass occupies residues 187–211 (ILCLISMFFAMLFLLVSLYIHMFLL). Over 212-239 (ARTHVKRIAALPGASSARQRTSMQGAVT) the chain is Cytoplasmic. Residues 240-265 (VTMLLGVFTVCWAPFFLHLTLMLSCP) form a helical membrane-spanning segment. At 266–273 (QNLYCSRF) the chain is on the extracellular side. Residues 274–297 (MSHFNMYLILIMCNSVMDPLIYAF) traverse the membrane as a helical segment. Residues 298–325 (RSQEMRKTFKEIICCRGFRIACSFPRRD) lie on the Cytoplasmic side of the membrane. S-palmitoyl cysteine attachment occurs at residues Cys-311 and Cys-312.

It belongs to the G-protein coupled receptor 1 family. As to expression, expressed in the brain but not in the melanoma cells.

The protein localises to the cell membrane. Functionally, receptor for MSH (alpha, beta and gamma) and ACTH. The activity of this receptor is mediated by G proteins which activate adenylate cyclase. This receptor is a possible mediator of the immunomodulation properties of melanocortins. This chain is Melanocortin receptor 5 (MC5R), found in Homo sapiens (Human).